The chain runs to 452 residues: Lysine-rich nucleolar protein 1 (452 aa).

Disordered regions lie at residues 1–28 (MITKAHKGEVGLGLPEKKKKKKKVVKEP), 55–161 (VIQE…AFSG), and 184–305 (REQA…PDTD). Lys-7 participates in a covalent cross-link: Glycyl lysine isopeptide (Lys-Gly) (interchain with G-Cter in SUMO2). Residues 65 to 75 (LVKKKKKKKGH) are compositionally biased toward basic residues. Over residues 78–98 (ICEEHLEPEITLRAGRTERSH) the composition is skewed to basic and acidic residues. Position 112 is a phosphoserine (Ser-112). Lys-126 is covalently cross-linked (Glycyl lysine isopeptide (Lys-Gly) (interchain with G-Cter in SUMO2)). A compositionally biased stretch (basic and acidic residues) spans 127-139 (TSPDPRQDEEVTR). Ser-128 carries the post-translational modification Phosphoserine. Basic residues-rich tracts occupy residues 140 to 151 (VGKKLKKHKKEK) and 258 to 267 (SVKKKVKSKK). Residue Ser-258 is modified to Phosphoserine. Lys-280 is covalently cross-linked (Glycyl lysine isopeptide (Lys-Gly) (interchain with G-Cter in SUMO2)). Residues 293-305 (VAEEPWEEEPDTD) are compositionally biased toward acidic residues. The interval 300–452 (EEPDTDLEVV…NASKSIKFED (153 aa)) is interaction with ZNF106. Thr-304 bears the Phosphothreonine mark. Glycyl lysine isopeptide (Lys-Gly) (interchain with G-Cter in SUMO2) cross-links involve residues Lys-313, Lys-347, Lys-367, Lys-369, and Lys-401. Arg-424 bears the Omega-N-methylarginine mark. A Glycyl lysine isopeptide (Lys-Gly) (interchain with G-Cter in SUMO2) cross-link involves residue Lys-436.

Interacts with ZNF106.

Its subcellular location is the nucleus. The protein resides in the nucleolus. This chain is Lysine-rich nucleolar protein 1 (KNOP1), found in Bos taurus (Bovine).